The sequence spans 159 residues: MAVFVANESGVTDFDEVTLAALARFVLDTMKVNPLAELSVMLVEIDAMTDLHVRYMAEEGPTDVLAFPQDEAFEPSWSESPEEDPTTLLGDVVLCPEVARRQAAQAGHGMERELHILCTHGILHLLGYDHAEPEEEREMWKLQNSLLASWDTAAGTGAS.

Residues His-120, His-124, and His-130 each contribute to the Zn(2+) site.

It belongs to the endoribonuclease YbeY family. Zn(2+) is required as a cofactor.

The protein localises to the cytoplasm. Its function is as follows. Single strand-specific metallo-endoribonuclease involved in late-stage 70S ribosome quality control and in maturation of the 3' terminus of the 16S rRNA. This is Endoribonuclease YbeY from Parafrankia sp. (strain EAN1pec).